Reading from the N-terminus, the 222-residue chain is Hexitol phosphatase B (222 aa).

Asp13 (nucleophile) is an active-site residue. A divalent metal cation-binding residues include Asp13 and Asp15. Residues 13 to 15 (DMD), 115 to 116 (SA), and Lys148 each bind substrate. Asp15 (proton donor) is an active-site residue. Asp173 is a binding site for a divalent metal cation.

This sequence belongs to the HAD-like hydrolase superfamily. CbbY/CbbZ/Gph/YieH family. It depends on Mg(2+) as a cofactor. Mn(2+) is required as a cofactor. The cofactor is Co(2+). Zn(2+) serves as cofactor.

The enzyme catalyses sugar phosphate + H2O = sugar + phosphate.. It carries out the reaction 2-deoxy-D-glucose 6-phosphate + H2O = 2-deoxy-D-glucose + phosphate. The catalysed reaction is D-mannitol 1-phosphate + H2O = D-mannitol + phosphate. It catalyses the reaction D-sorbitol 6-phosphate + H2O = D-sorbitol + phosphate. Functionally, sugar-phosphate phosphohydrolase that catalyzes the dephosphorylation of D-mannitol 1-phosphate and D-sorbitol 6-phosphate. Also catalyzes the dephosphorylation of 2-deoxyglucose 6-phosphate (2dGlu6P); this is a biologically important activity in vivo since it contributes to the elimination of this toxic compound and plays an important role in the resistance of E.coli to 2-deoxyglucose. To a lesser extent, is also able to dephosphorylate mannose 6-phosphate (Man6P), erythrose-4-phosphate, 2-deoxyribose-5-phosphate (2dRib5P), ribose-5-phosphate (Rib5P) and glucose-6-phosphate (Glu6P) in vitro. The protein is Hexitol phosphatase B of Escherichia coli (strain K12).